Reading from the N-terminus, the 272-residue chain is Indole-3-glycerol phosphate synthase (272 aa).

It belongs to the TrpC family.

It catalyses the reaction 1-(2-carboxyphenylamino)-1-deoxy-D-ribulose 5-phosphate + H(+) = (1S,2R)-1-C-(indol-3-yl)glycerol 3-phosphate + CO2 + H2O. The protein operates within amino-acid biosynthesis; L-tryptophan biosynthesis; L-tryptophan from chorismate: step 4/5. This chain is Indole-3-glycerol phosphate synthase, found in Paenarthrobacter aurescens (strain TC1).